A 155-amino-acid chain; its full sequence is SsrA-binding protein (155 aa).

This sequence belongs to the SmpB family.

Its subcellular location is the cytoplasm. In terms of biological role, required for rescue of stalled ribosomes mediated by trans-translation. Binds to transfer-messenger RNA (tmRNA), required for stable association of tmRNA with ribosomes. tmRNA and SmpB together mimic tRNA shape, replacing the anticodon stem-loop with SmpB. tmRNA is encoded by the ssrA gene; the 2 termini fold to resemble tRNA(Ala) and it encodes a 'tag peptide', a short internal open reading frame. During trans-translation Ala-aminoacylated tmRNA acts like a tRNA, entering the A-site of stalled ribosomes, displacing the stalled mRNA. The ribosome then switches to translate the ORF on the tmRNA; the nascent peptide is terminated with the 'tag peptide' encoded by the tmRNA and targeted for degradation. The ribosome is freed to recommence translation, which seems to be the essential function of trans-translation. In Geobacillus thermodenitrificans (strain NG80-2), this protein is SsrA-binding protein.